We begin with the raw amino-acid sequence, 770 residues long: Arf-GAP with coiled-coil, ANK repeat and PH domain-containing protein 2 (770 aa).

A BAR domain is found at 1–226 (MKMTVDFEEC…MKDLGAQLDR (226 aa)). The 96-residue stretch at 266-361 (GIVMEGYLFK…WIKAVQTSIA (96 aa)) folds into the PH domain. The interval 371–391 (SEKLDKKSSPSTGSLDSGNES) is disordered. The span at 379–388 (SPSTGSLDSG) shows a compositional bias: polar residues. S384 and S387 each carry phosphoserine. The Arf-GAP domain occupies 399–520 (ESALQRVQCI…KFVDKYSALL (122 aa)). A C4-type zinc finger spans residues 414–437 (CCDCGLADPRWASINLGITLCIEC). Position 521 is a phosphoserine (S521). The tract at residues 542-572 (ARASVHTPVKSNDSGIQQCSEDGRESLPSTV) is disordered. Residues 550 to 561 (VKSNDSGIQQCS) show a composition bias toward polar residues. A phosphoserine mark is found at S573 and S576. ANK repeat units lie at residues 632–661 (NQATPLIQAVLGGSLVTCEFLLQNGANVNQ), 665–694 (QGRGPLHHATVLGHTGQVCLFLKRGANQHA), and 698–727 (EGKDPLSIAVEAANADIVTLLRLARMNEEM). The residue at position 734 (Y734) is a Phosphotyrosine. S767 bears the Phosphoserine mark.

As to quaternary structure, interacts with RAB35 (GTP-bound form); the interaction is direct and probably recruits ACAP2 to membranes. Interacts with MICALL1; the interaction is indirect through RAB35.

The protein localises to the endosome membrane. The protein resides in the cell membrane. With respect to regulation, GAP activity stimulated by phosphatidylinositol 4,5-bisphosphate (PIP2) and phosphatidic acid. GTPase-activating protein (GAP) for ADP ribosylation factor 6 (ARF6). Doesn't show GAP activity for RAB35. The polypeptide is Arf-GAP with coiled-coil, ANK repeat and PH domain-containing protein 2 (Acap2) (Mus musculus (Mouse)).